Reading from the N-terminus, the 225-residue chain is Ribonuclease HII (225 aa).

An RNase H type-2 domain is found at 35 to 225 (GLVAGVDEVG…SFRPCQISLD (191 aa)). Residues aspartate 41, glutamate 42, and aspartate 137 each coordinate a divalent metal cation.

Belongs to the RNase HII family. Requires Mn(2+) as cofactor. Mg(2+) serves as cofactor.

It localises to the cytoplasm. It carries out the reaction Endonucleolytic cleavage to 5'-phosphomonoester.. Functionally, endonuclease that specifically degrades the RNA of RNA-DNA hybrids. The chain is Ribonuclease HII from Trichormus variabilis (strain ATCC 29413 / PCC 7937) (Anabaena variabilis).